A 577-amino-acid chain; its full sequence is Phosphoenolpyruvate-protein phosphotransferase (577 aa).

The active-site Tele-phosphohistidine intermediate is the histidine 191. Phosphoenolpyruvate is bound by residues arginine 298 and arginine 334. 2 residues coordinate Mg(2+): glutamate 435 and aspartate 459. Phosphoenolpyruvate-binding positions include 458-459 (ND) and arginine 469. Cysteine 506 acts as the Proton donor in catalysis.

It belongs to the PEP-utilizing enzyme family. In terms of assembly, homodimer. It depends on Mg(2+) as a cofactor.

It localises to the cytoplasm. It catalyses the reaction L-histidyl-[protein] + phosphoenolpyruvate = N(pros)-phospho-L-histidyl-[protein] + pyruvate. General (non sugar-specific) component of the phosphoenolpyruvate-dependent sugar phosphotransferase system (sugar PTS). This major carbohydrate active-transport system catalyzes the phosphorylation of incoming sugar substrates concomitantly with their translocation across the cell membrane. Enzyme I transfers the phosphoryl group from phosphoenolpyruvate (PEP) to the phosphoryl carrier protein (HPr). The sequence is that of Phosphoenolpyruvate-protein phosphotransferase (ptsI) from Streptococcus equinus (Streptococcus bovis).